The chain runs to 161 residues: 6,7-dimethyl-8-ribityllumazine synthase (161 aa).

5-amino-6-(D-ribitylamino)uracil-binding positions include Trp-31, 65–67, and 89–91; these read TFE and CVV. 94–95 lines the (2S)-2-hydroxy-3-oxobutyl phosphate pocket; that stretch reads DT. Residue His-97 is the Proton donor of the active site. Phe-122 contributes to the 5-amino-6-(D-ribitylamino)uracil binding site. Arg-136 lines the (2S)-2-hydroxy-3-oxobutyl phosphate pocket.

The protein belongs to the DMRL synthase family.

It catalyses the reaction (2S)-2-hydroxy-3-oxobutyl phosphate + 5-amino-6-(D-ribitylamino)uracil = 6,7-dimethyl-8-(1-D-ribityl)lumazine + phosphate + 2 H2O + H(+). It participates in cofactor biosynthesis; riboflavin biosynthesis; riboflavin from 2-hydroxy-3-oxobutyl phosphate and 5-amino-6-(D-ribitylamino)uracil: step 1/2. Its function is as follows. Catalyzes the formation of 6,7-dimethyl-8-ribityllumazine by condensation of 5-amino-6-(D-ribitylamino)uracil with 3,4-dihydroxy-2-butanone 4-phosphate. This is the penultimate step in the biosynthesis of riboflavin. The sequence is that of 6,7-dimethyl-8-ribityllumazine synthase from Porphyromonas gingivalis (strain ATCC 33277 / DSM 20709 / CIP 103683 / JCM 12257 / NCTC 11834 / 2561).